The following is a 217-amino-acid chain: Deoxyribose-phosphate aldolase (217 aa).

Asp-89 (proton donor/acceptor) is an active-site residue. The active-site Schiff-base intermediate with acetaldehyde is Lys-151. Residue Lys-180 is the Proton donor/acceptor of the active site.

This sequence belongs to the DeoC/FbaB aldolase family. DeoC type 1 subfamily.

The protein resides in the cytoplasm. The catalysed reaction is 2-deoxy-D-ribose 5-phosphate = D-glyceraldehyde 3-phosphate + acetaldehyde. It functions in the pathway carbohydrate degradation; 2-deoxy-D-ribose 1-phosphate degradation; D-glyceraldehyde 3-phosphate and acetaldehyde from 2-deoxy-alpha-D-ribose 1-phosphate: step 2/2. Its function is as follows. Catalyzes a reversible aldol reaction between acetaldehyde and D-glyceraldehyde 3-phosphate to generate 2-deoxy-D-ribose 5-phosphate. This is Deoxyribose-phosphate aldolase from Mycoplasma mobile (strain ATCC 43663 / 163K / NCTC 11711) (Mesomycoplasma mobile).